A 127-amino-acid polypeptide reads, in one-letter code: Large ribosomal subunit protein bL12 (127 aa).

Positions 98 to 127 are disordered; sequence PKPVKNGVSKEEAEEAKKQLVESGAEVEIK. The segment covering 105-117 has biased composition (basic and acidic residues); it reads VSKEEAEEAKKQL.

This sequence belongs to the bacterial ribosomal protein bL12 family. In terms of assembly, homodimer. Part of the ribosomal stalk of the 50S ribosomal subunit. Forms a multimeric L10(L12)X complex, where L10 forms an elongated spine to which 2 to 4 L12 dimers bind in a sequential fashion. Binds GTP-bound translation factors.

In terms of biological role, forms part of the ribosomal stalk which helps the ribosome interact with GTP-bound translation factors. Is thus essential for accurate translation. This chain is Large ribosomal subunit protein bL12, found in Geobacter sulfurreducens (strain ATCC 51573 / DSM 12127 / PCA).